The sequence spans 312 residues: GDP-L-fucose synthase (312 aa).

Glycine 11 to glycine 17 serves as a coordination point for NADP(+). The Proton donor/acceptor role is filled by tyrosine 136. NADP(+) is bound by residues lysine 140 and histidine 179. Substrate contacts are provided by lysine 187, tryptophan 202, and arginine 209.

It belongs to the NAD(P)-dependent epimerase/dehydratase family. Fucose synthase subfamily.

It catalyses the reaction GDP-beta-L-fucose + NADP(+) = GDP-4-dehydro-alpha-D-rhamnose + NADPH + H(+). It functions in the pathway nucleotide-sugar biosynthesis; GDP-L-fucose biosynthesis via de novo pathway; GDP-L-fucose from GDP-alpha-D-mannose: step 2/2. Functionally, catalyzes the two-step NADP-dependent conversion of GDP-4-dehydro-6-deoxy-D-mannose to GDP-fucose, involving an epimerase and a reductase reaction. The protein is GDP-L-fucose synthase of Azorhizobium caulinodans (strain ATCC 43989 / DSM 5975 / JCM 20966 / LMG 6465 / NBRC 14845 / NCIMB 13405 / ORS 571).